A 525-amino-acid chain; its full sequence is GMP synthase [glutamine-hydrolyzing] (525 aa).

Positions 9 to 207 (RILILDFGSQ…VHEICGCPAD (199 aa)) constitute a Glutamine amidotransferase type-1 domain. Cysteine 86 (nucleophile) is an active-site residue. Catalysis depends on residues histidine 181 and glutamate 183. The GMPS ATP-PPase domain occupies 208–400 (WTPGNIVDDL…LGLPADMVYR (193 aa)). 235 to 241 (SGGVDSS) provides a ligand contact to ATP.

In terms of assembly, homodimer.

The enzyme catalyses XMP + L-glutamine + ATP + H2O = GMP + L-glutamate + AMP + diphosphate + 2 H(+). The protein operates within purine metabolism; GMP biosynthesis; GMP from XMP (L-Gln route): step 1/1. Its function is as follows. Catalyzes the synthesis of GMP from XMP. The chain is GMP synthase [glutamine-hydrolyzing] from Alkalilimnicola ehrlichii (strain ATCC BAA-1101 / DSM 17681 / MLHE-1).